Here is a 552-residue protein sequence, read N- to C-terminus: Polypeptide N-acetylgalactosaminyltransferase 14 (552 aa).

Residues 1 to 6 (MRRLTR) are Cytoplasmic-facing. The chain crosses the membrane as a helical; Signal-anchor for type II membrane protein span at residues 7 to 26 (RLVLPVFGVLWITVLLFFWV). Residues 27 to 552 (TKRKLEVPTG…MSQHWDMVSS (526 aa)) are Lumenal-facing. Intrachain disulfides connect cysteine 101–cysteine 328, cysteine 319–cysteine 397, cysteine 430–cysteine 449, cysteine 476–cysteine 493, and cysteine 517–cysteine 538. The tract at residues 110–215 (LPPTSIIITF…RDWLQPLLHR (106 aa)) is catalytic subdomain A. Residues aspartate 151 and arginine 176 each coordinate substrate. Aspartate 199 contacts Mn(2+). Serine 200 contacts substrate. Histidine 201 provides a ligand contact to Mn(2+). Residues 274 to 336 (PIRTPIIAGG…PCSRVGHVFR (63 aa)) form a catalytic subdomain B region. Residue tryptophan 305 participates in substrate binding. Position 333 (histidine 333) interacts with Mn(2+). Residues arginine 336, histidine 339, and tyrosine 341 each coordinate substrate. In terms of domain architecture, Ricin B-type lectin spans 415–550 (KESSIQKGNI…SLMSQHWDMV (136 aa)).

It belongs to the glycosyltransferase 2 family. GalNAc-T subfamily. Mn(2+) is required as a cofactor. Detected in renal tubules (at protein level). Highly expressed in fetal and adult kidney. Widely expressed at low level. Weakly expressed in whole brain, cerebellum, thymus, lung, mammary gland, liver, stomach, small intestine, colon, pancreas, spleen, bladder, uterus, placenta, testis, ovary, skeletal muscle, leukocyte, B-cell, bone marrow, fetal brain, fetal thymus, fetal lung, fetal liver, fetal small intestine, fetal spleen, fetal skeletal and fetus. Detected in renal tubules (at protein level).

It localises to the golgi apparatus membrane. The catalysed reaction is L-seryl-[protein] + UDP-N-acetyl-alpha-D-galactosamine = a 3-O-[N-acetyl-alpha-D-galactosaminyl]-L-seryl-[protein] + UDP + H(+). The enzyme catalyses L-threonyl-[protein] + UDP-N-acetyl-alpha-D-galactosamine = a 3-O-[N-acetyl-alpha-D-galactosaminyl]-L-threonyl-[protein] + UDP + H(+). It functions in the pathway protein modification; protein glycosylation. In terms of biological role, catalyzes the initial reaction in O-linked oligosaccharide biosynthesis, the transfer of an N-acetyl-D-galactosamine residue to a serine or threonine residue on the protein receptor. Displays activity toward mucin-derived peptide substrates such as Muc2, Muc5AC, Muc7, and Muc13 (-58). May be involved in O-glycosylation in kidney. The polypeptide is Polypeptide N-acetylgalactosaminyltransferase 14 (GALNT14) (Homo sapiens (Human)).